The sequence spans 101 residues: Large ribosomal subunit protein eL21 (101 aa).

Basic residues predominate over residues 1–18; that stretch reads MVKHSRGYRTRSRSLLRK. Residues 1–23 form a disordered region; it reads MVKHSRGYRTRSRSLLRKSPRER.

This sequence belongs to the eukaryotic ribosomal protein eL21 family.

This chain is Large ribosomal subunit protein eL21, found in Saccharolobus islandicus (strain Y.N.15.51 / Yellowstone #2) (Sulfolobus islandicus).